Consider the following 389-residue polypeptide: Urotensin-2 receptor (389 aa).

Polar residues predominate over residues 1-10; it reads MALTPESPSS. A disordered region spans residues 1–39; that stretch reads MALTPESPSSFPGLAATGSSVPEPPGGPNATLNSSWASP. The Extracellular segment spans residues 1 to 54; that stretch reads MALTPESPSSFPGLAATGSSVPEPPGGPNATLNSSWASPTEPSSLEDLVATGTI. N-linked (GlcNAc...) asparagine glycosylation is found at Asn29 and Asn33. Positions 30–39 are enriched in polar residues; it reads ATLNSSWASP. Residues 55 to 77 form a helical membrane-spanning segment; the sequence is GTLLSAMGVVGVVGNAYTLVVTC. Topologically, residues 78–87 are cytoplasmic; that stretch reads RSLRAVASMY. A helical membrane pass occupies residues 88–113; sequence VYVVNLALADLLYLLSIPFIVATYVT. The Extracellular portion of the chain corresponds to 114-124; sequence KEWHFGDVGCR. Residues Cys123 and Cys199 are joined by a disulfide bond. The chain crosses the membrane as a helical span at residues 125-146; that stretch reads VLFGLDFLTMHASIFTLTVMSS. Residues 147–167 are Cytoplasmic-facing; sequence ERYAAVLRPLDTVQRPKGYRK. The helical transmembrane segment at 168–186 threads the bilayer; it reads LLALGTWLLALLLTLPVML. At 187–209 the chain is on the extracellular side; it reads AMRLVRRGPKSLCLPAWGPRAHR. The helical transmembrane segment at 210 to 232 threads the bilayer; that stretch reads AYLTLLFATSIAGPGLLIGLLYA. Topologically, residues 233 to 258 are cytoplasmic; the sequence is RLARAYRRSQRASFKRARRPGARALR. The helical transmembrane segment at 259-284 threads the bilayer; sequence LVLGIVLLFWACFLPFWLWQLLAQYH. The Extracellular segment spans residues 285-297; that stretch reads QAPLAPRTARIVN. A helical membrane pass occupies residues 298–318; the sequence is YLTTCLTYGNSCANPFLYTLL. Residues 319–389 are Cytoplasmic-facing; the sequence is TRNYRDHLRG…PAPEGPRAPA (71 aa). The interval 328–389 is disordered; it reads GRVRGPGSGG…PAPEGPRAPA (62 aa). Residues 331–340 show a composition bias toward gly residues; sequence RGPGSGGGRG. Over residues 355–368 the composition is skewed to polar residues; the sequence is SGRSLSSCSPQPTD. Over residues 377 to 389 the composition is skewed to pro residues; it reads PARPAPEGPRAPA.

It belongs to the G-protein coupled receptor 1 family. In terms of tissue distribution, most abundant expression in the heart and pancreas.

The protein resides in the cell membrane. In terms of biological role, high affinity receptor for urotensin-2 and urotensin-2B. The activity of this receptor is mediated by a G-protein that activate a phosphatidylinositol-calcium second messenger system. The sequence is that of Urotensin-2 receptor (UTS2R) from Homo sapiens (Human).